The primary structure comprises 96 residues: UPF0235 protein YggU (96 aa).

This sequence belongs to the UPF0235 family.

This chain is UPF0235 protein YggU, found in Salmonella agona (strain SL483).